A 168-amino-acid polypeptide reads, in one-letter code: Small ribosomal subunit protein uS8 (168 aa).

The interval 59-93 (EEYKKMKELAEKSPNPKMKRYLKQLEEYNKGTQYP) is not found in other S8 sequences.

The protein belongs to the universal ribosomal protein uS8 family. In terms of assembly, part of the 30S ribosomal subunit. Contacts proteins S5 and S12.

One of the primary rRNA binding proteins, it binds directly to 16S rRNA central domain where it helps coordinate assembly of the platform of the 30S subunit. The protein is Small ribosomal subunit protein uS8 of Aquifex aeolicus (strain VF5).